The chain runs to 432 residues: Glutamate-1-semialdehyde 2,1-aminomutase 1 (432 aa).

Position 272 is an N6-(pyridoxal phosphate)lysine (K272).

It belongs to the class-III pyridoxal-phosphate-dependent aminotransferase family. HemL subfamily. Homodimer. Requires pyridoxal 5'-phosphate as cofactor.

It localises to the cytoplasm. The catalysed reaction is (S)-4-amino-5-oxopentanoate = 5-aminolevulinate. It participates in porphyrin-containing compound metabolism; protoporphyrin-IX biosynthesis; 5-aminolevulinate from L-glutamyl-tRNA(Glu): step 2/2. In Exiguobacterium sibiricum (strain DSM 17290 / CCUG 55495 / CIP 109462 / JCM 13490 / 255-15), this protein is Glutamate-1-semialdehyde 2,1-aminomutase 1.